The following is a 203-amino-acid chain: 5-formyltetrahydrofolate cyclo-ligase (203 aa).

N-acetylalanine is present on Ala-2. Residues 10–14 and Arg-14 contribute to the ATP site; that span reads KRSLR. Substrate is bound by residues Leu-56, Glu-61, and 148–152; that span reads RGKGY. Residue 145–153 coordinates ATP; that stretch reads RLGRGKGYY. The Mg(2+) site is built by Asp-154 and Asp-189.

Belongs to the 5-formyltetrahydrofolate cyclo-ligase family. As to quaternary structure, monomer. Requires Mg(2+) as cofactor.

The protein resides in the cytoplasm. It carries out the reaction (6S)-5-formyl-5,6,7,8-tetrahydrofolate + ATP = (6R)-5,10-methenyltetrahydrofolate + ADP + phosphate. In terms of biological role, contributes to tetrahydrofolate metabolism. Helps regulate carbon flow through the folate-dependent one-carbon metabolic network that supplies carbon for the biosynthesis of purines, thymidine and amino acids. Catalyzes the irreversible conversion of 5-formyltetrahydrofolate (5-FTHF) to yield 5,10-methenyltetrahydrofolate. The polypeptide is 5-formyltetrahydrofolate cyclo-ligase (MTHFS) (Homo sapiens (Human)).